The primary structure comprises 593 residues: MALLISCGEVTSSQFTVFRLLNQSLDFVSDNVSRLLAPIFTNLRDFEMRLSCIERPPSISGNHSHLCTEKWFSDQKDYDQKEDPEAIFNVLDYILKSSLDRLASLRESVCQTKSFDYDDCLSIHSSIMRDLCLQGKLDAALWLRKKMIYSGVIPGLITHNHLLNGLCKAGYIEKADGLVREMREMGPSPNCVSYNTLIKGLCSVNNVDKALYLFNTMNKYGIRPNRVTCNIIVHALCQKGVIGNNNKKLLEEILDSSQANAPLDIVICTILMDSCFKNGNVVQALEVWKEMSQKNVPADSVVYNVIIRGLCSSGNMVAAYGFMCDMVKRGVNPDVFTYNTLISALCKEGKFDEACDLHGTMQNGGVAPDQISYKVIIQGLCIHGDVNRANEFLLSMLKSSLLPEVLLWNVVIDGYGRYGDTSSALSVLNLMLSYGVKPNVYTNNALIHGYVKGGRLIDAWWVKNEMRSTKIHPDTTTYNLLLGAACTLGHLRLAFQLYDEMLRRGCQPDIITYTELVRGLCWKGRLKKAESLLSRIQATGITIDHVPFLILAKKYTRLQRPGEAYLVYKKWLATRNRGVSCPSILNHMHTEEQ.

12 PPR repeats span residues 120–154, 155–189, 190–224, 225–256, 264–298, 299–333, 334–368, 369–403, 404–438, 439–473, 474–508, and 509–543; these read CLSIHSSIMRDLCLQGKLDAALWLRKKMIYSGVIP, GLITHNHLLNGLCKAGYIEKADGLVREMREMGPSP, NCVSYNTLIKGLCSVNNVDKALYLFNTMNKYGIRP, NRVTCNIIVHALCQKGVIGNNNKKLLEEILDS, DIVICTILMDSCFKNGNVVQALEVWKEMSQKNVPA, DSVVYNVIIRGLCSSGNMVAAYGFMCDMVKRGVNP, DVFTYNTLISALCKEGKFDEACDLHGTMQNGGVAP, DQISYKVIIQGLCIHGDVNRANEFLLSMLKSSLLP, EVLLWNVVIDGYGRYGDTSSALSVLNLMLSYGVKP, NVYTNNALIHGYVKGGRLIDAWWVKNEMRSTKIHP, DTTTYNLLLGAACTLGHLRLAFQLYDEMLRRGCQP, and DIITYTELVRGLCWKGRLKKAESLLSRIQATGITI.

This sequence belongs to the PPR family. P subfamily.

The protein is Pentatricopeptide repeat-containing protein At5g24830 of Arabidopsis thaliana (Mouse-ear cress).